Here is a 286-residue protein sequence, read N- to C-terminus: Ribose-phosphate pyrophosphokinase (286 aa).

ATP contacts are provided by residues 34–36 (DGE) and 91–92 (RQ). Mg(2+)-binding residues include His-124 and Asp-161. Lys-184 is a catalytic residue. D-ribose 5-phosphate contacts are provided by residues Arg-186, Asp-210, and 214 to 218 (STGGT).

Belongs to the ribose-phosphate pyrophosphokinase family. Class III (archaeal) subfamily. The cofactor is Mg(2+).

The protein localises to the cytoplasm. It catalyses the reaction D-ribose 5-phosphate + ATP = 5-phospho-alpha-D-ribose 1-diphosphate + AMP + H(+). It participates in metabolic intermediate biosynthesis; 5-phospho-alpha-D-ribose 1-diphosphate biosynthesis; 5-phospho-alpha-D-ribose 1-diphosphate from D-ribose 5-phosphate (route I): step 1/1. Involved in the biosynthesis of the central metabolite phospho-alpha-D-ribosyl-1-pyrophosphate (PRPP) via the transfer of pyrophosphoryl group from ATP to 1-hydroxyl of ribose-5-phosphate (Rib-5-P). This Thermoplasma acidophilum (strain ATCC 25905 / DSM 1728 / JCM 9062 / NBRC 15155 / AMRC-C165) protein is Ribose-phosphate pyrophosphokinase.